A 502-amino-acid chain; its full sequence is Dynein regulatory complex subunit 2 (502 aa).

Coiled coils occupy residues 96-160 (DSVI…RKAI) and 252-285 (EKSS…HSRE).

The protein belongs to the DRC2 family. As to quaternary structure, component of the nexin-dynein regulatory complex (N-DRC). Interacts with DRC1.

The protein localises to the cytoplasm. It is found in the cytoskeleton. The protein resides in the flagellum basal body. Its subcellular location is the cell projection. It localises to the cilium. The protein localises to the flagellum. It is found in the flagellum axoneme. Component of the nexin-dynein regulatory complex (N-DRC), a key regulator of ciliary/flagellar motility which maintains the alignment and integrity of the distal axoneme and regulates microtubule sliding in motile axonemes. Plays a critical role in the assembly of N-DRC and also stabilizes the assembly of multiple inner dynein arms and radial spokes. Coassembles with DRC1 to form a central scaffold needed for assembly of the N-DRC and its attachment to the outer doublet microtubules. The polypeptide is Dynein regulatory complex subunit 2 (Ccdc65) (Rattus norvegicus (Rat)).